The primary structure comprises 218 residues: Sodium channel regulatory subunit beta-1 (218 aa).

The signal sequence occupies residues 1-18 (MGRLLALVVGAALVSSAC). Topologically, residues 19–157 (GGCVEVDSET…DKANRDMASI (139 aa)) are extracellular. 2 disulfides stabilise this stretch: C21–C43 and C40–C121. In terms of domain architecture, Ig-like C2-type spans 22–150 (VEVDSETEAV…KIHIEVVDKA (129 aa)). N-linked (GlcNAc...) asparagine glycosylation is found at N93, N110, N114, and N135. The helical transmembrane segment at 158 to 179 (VSEIMMYVLIVVLTIWLVAEMI) threads the bilayer. At 180–218 (YCYKKIAAATETAAQENASEYLAITSESKENCTGVQVAE) the chain is on the cytoplasmic side.

It belongs to the sodium channel auxiliary subunit SCN1B (TC 8.A.17) family. In terms of assembly, voltage-gated sodium (Nav) channel consists of an ion-conducting pore-forming alpha subunit functional on its own that is regulated by one or more beta subunits. Interacts with SCN1A; regulatory subunit of SCN1A/Nav1.1. Interacts with SCN3A; regulatory subunit of SCN3A/Nav1.3. Interacts with SCN4A; regulatory subunit of SCN4A/Nav1.4. Interacts with SCN5A; regulatory subunit of SCN5A/Nav1.5. Interacts with SCN8A; regulatory subunit of SCN8A/Nav1.6. Interacts with SCN9A; regulatory subunit of SCN9A/Nav1.7. Interacts with SCN10A; regulatory subunit of SCN10A/Nav1.8. Interacts with NFASC. Interacts with TMEM65. As to expression, the overall expression of isoform 1 and isoform 2 is very similar. Isoform 1 is abundantly expressed in skeletal muscle, heart and brain. Isoform 2 is highly expressed in brain and skeletal muscle and present at a very low level in heart, placenta, lung, liver, kidney and pancreas. In brain, isoform 2 is most abundant in the cerebellum, followed by the cerebral cortex and occipital lobe, while isoform 1 levels are higher in the cortex compared to the cerebellum. Isoform 2 is expressed in many regions of the brain, including cerebellar Purkinje cells, cortex pyramidal neurons and many of the neuronal fibers throughout the brain (at protein level). Also detected in dorsal root ganglion, in fibers of the spinal nerve and in cortical neurons and their processes (at protein level).

It is found in the cell membrane. The protein resides in the perikaryon. Its subcellular location is the cell projection. The protein localises to the axon. It localises to the secreted. Regulatory subunit of multiple voltage-gated sodium (Nav) channels directly mediating the depolarization of excitable membranes. Navs, also called VGSCs (voltage-gated sodium channels) or VDSCs (voltage-dependent sodium channels), operate by switching between closed and open conformations depending on the voltage difference across the membrane. In the open conformation they allow Na(+) ions to selectively pass through the pore, along their electrochemical gradient. The influx of Na+ ions provokes membrane depolarization, initiating the propagation of electrical signals throughout cells and tissues. The accessory beta subunits participate in localization and functional modulation of the Nav channels. Modulates the activity of SCN1A/Nav1.1, SCN2A/Nav1.2, SCN3A/Nav1.3, SCN4A/Nav1.4, SCN5A/Nav1.5, SCN8A/Nav1.6, SCN9A/Nav1.7 and SCN10A/Nav1.8. In terms of biological role, cell adhesion molecule that plays a critical role in neuronal migration and pathfinding during brain development. Stimulates neurite outgrowth. Has no regulatory function on the SCN2A sodium channel complex. The chain is Sodium channel regulatory subunit beta-1 from Homo sapiens (Human).